We begin with the raw amino-acid sequence, 605 residues long: Elongation factor 4 (605 aa).

A tr-type G domain is found at 11–193 (EKIRNFSIIA…QIVEKVPAPT (183 aa)). Residues 23-28 (DHGKST) and 140-143 (NKID) contribute to the GTP site.

This sequence belongs to the TRAFAC class translation factor GTPase superfamily. Classic translation factor GTPase family. LepA subfamily.

It is found in the cell membrane. It carries out the reaction GTP + H2O = GDP + phosphate + H(+). Required for accurate and efficient protein synthesis under certain stress conditions. May act as a fidelity factor of the translation reaction, by catalyzing a one-codon backward translocation of tRNAs on improperly translocated ribosomes. Back-translocation proceeds from a post-translocation (POST) complex to a pre-translocation (PRE) complex, thus giving elongation factor G a second chance to translocate the tRNAs correctly. Binds to ribosomes in a GTP-dependent manner. The chain is Elongation factor 4 from Streptococcus pyogenes serotype M4 (strain MGAS10750).